The following is a 102-amino-acid chain: Small ribosomal subunit protein uS10 (102 aa).

This sequence belongs to the universal ribosomal protein uS10 family. As to quaternary structure, part of the 30S ribosomal subunit.

Functionally, involved in the binding of tRNA to the ribosomes. The protein is Small ribosomal subunit protein uS10 of Methylobacillus flagellatus (strain ATCC 51484 / DSM 6875 / VKM B-1610 / KT).